The sequence spans 442 residues: UPF0489 protein C5orf22 homolog (442 aa).

The interval 175–208 is disordered; it reads SSAKKPKLALEDSRNTASTNCDSSSEGLEKDTAT. A compositionally biased stretch (polar residues) spans 189–200; the sequence is NTASTNCDSSSE.

Belongs to the UPF0489 family.

The chain is UPF0489 protein C5orf22 homolog from Pongo abelii (Sumatran orangutan).